The primary structure comprises 412 residues: P-selectin glycoprotein ligand 1 (412 aa).

The N-terminal stretch at 1 to 17 (MPLQLLLLLILLGPGNS) is a signal peptide. A propeptide spanning residues 18–41 (LQLWDTWADEAEKALGPLLARDRR) is cleaved from the precursor. Over 18–320 (LQLWDTWADE…APDHISVKQC (303 aa)) the chain is Extracellular. Gln42 carries the pyrrolidone carboxylic acid modification. Tyr46, Tyr48, and Tyr51 each carry sulfotyrosine. The interval 56–95 (ETEPPEMLRNSTDTTPLTGPGTPESTTVEPAARRSTGLDA) is disordered. Thr57 is a glycosylation site (O-linked (GalNAc...) threonine). Asn65 carries an N-linked (GlcNAc...) asparagine glycan. Residues 66 to 82 (STDTTPLTGPGTPESTT) show a composition bias toward low complexity. Asn111 is a glycosylation site (N-linked (GlcNAc...) asparagine). 12 consecutive repeat copies span residues 122–131 (QTTQPAATEA), 132–141 (QTTQPVPTEA), 142–151 (QTTPLAATEA), 162–171 (QTTPLAATEA), 182–191 (QTTQPTGLEA), 192–201 (QTTAPAAMEA), 202–211 (QTTAPAAMEA), 212–221 (QTTPPAAMEA), 222–231 (QTTQTTAMEA), 232–241 (QTTAPEATEA), 242–251 (QTTQPTATEA), and 252–261 (QTTPLAAMEA). Positions 122–261 (QTTQPAATEA…QTTPLAAMEA (140 aa)) are 12 X 10 AA tandem repeats. Disordered regions lie at residues 125 to 146 (QPAA…TTPL) and 166 to 252 (LAAT…TEAQ). Asn302 carries an N-linked (GlcNAc...) asparagine glycan. The helical transmembrane segment at 321–341 (LLAILILALVATIFFVCTVVL) threads the bilayer. Topologically, residues 342 to 412 (AVRLSRKGHM…DDLTLHSFLP (71 aa)) are cytoplasmic. Positions 374 to 412 (EGPSATANGGLSKAKSPGLTPEPREDREGDDLTLHSFLP) are disordered. Basic and acidic residues predominate over residues 395 to 406 (EPREDREGDDLT). The residue at position 406 (Thr406) is a Phosphothreonine. Ser409 is modified (phosphoserine).

Homodimer; disulfide-linked. Interaction with P-, E- and L-selectins, through their lectin/EGF domains, is required for promoting recruitment and rolling of leukocytes. These interactions require sialyl Lewis X glycan modification but there is a differing dependence for tyrosine sulfations. Sulfation on Tyr-51 of PSGL1 is most important for high affinity L-selectin/SELL binding while P-selectin/SELP requires sulfation on Tyr-48. E-selectin/SELE binds with much lower affinity and requires the sLe(x) epitope, but apparently not tyrosine sulfation. Dimerization appears not to be required for P-selectin/SELP binding. Interacts with SNX20. Interacts with MSN and SYK; mediates the activation of SYK by SELPLG. Interacts with HAVCR1. In terms of assembly, (Microbial infection) Interacts with enterovirus 71 capsid proteins. As to quaternary structure, (Microbial infection) Interacts with Staphylococcus aureus proteins SSL5 and SSL11; these interactions prevent SELPLG-mediated neutrophil rolling. In terms of processing, displays complex, core-2, sialylated and fucosylated O-linked oligosaccharides, at least some of which appear to contain poly-N-acetyllactosamine with varying degrees of substitution. Mainly disialylated or neutral forms of the core-2 tetrasaccharide, Galbeta1--&gt;4GlcNAcbeta1--&gt;6(Galbeta1--&gt;3)GalNAcOH. The GlcN:GalN ratio is approximately 2:1 and the Man:Fuc ratio 3:5. Contains about 14% fucose with alpha-1,3 linkage present in two forms: One species is a disialylated, monofucosylated glycan, and the other, a monosialylated, trifucosylated glycan with a polylactosamine backbone. The fucosylated forms carry the Lewis antigen and are important for interaction with selectins and for functioning in leukocyte rolling. The modification containing the sialyl Lewis X glycan is on Thr-57. No sulfated O-glycans. Some N-glycosylation. Post-translationally, sulfation, in conjunction with the SLe(x)-containing glycan, is necessary for P- and L-selectin binding. High affinity P-selectin binding has a preferred requirement for the isomer sulfated on both Tyr-48 and Tyr-51, whereas L-selectin binding requires predominantly sulfation on Tyr-51 with sulfation on Tyr-48 playing only a minor role. These sulfations play an important role in L- and P-selectin-mediated neutrophil recruitment, and leukocyte rolling. In terms of tissue distribution, expressed on neutrophils, monocytes and most lymphocytes.

The protein localises to the membrane. Its function is as follows. An SLe(x)-type proteoglycan, which through high affinity, calcium-dependent interactions with E-, P- and L-selectins, mediates rapid rolling of leukocytes over vascular surfaces during the initial steps in inflammation. Critical for the initial leukocyte capture. Functionally, (Microbial infection) Acts as a receptor for enterovirus 71. This Homo sapiens (Human) protein is P-selectin glycoprotein ligand 1 (SELPLG).